The following is a 130-amino-acid chain: Small ribosomal subunit protein uS9 (130 aa).

Belongs to the universal ribosomal protein uS9 family.

This Caldicellulosiruptor saccharolyticus (strain ATCC 43494 / DSM 8903 / Tp8T 6331) protein is Small ribosomal subunit protein uS9.